Consider the following 179-residue polypeptide: Large ribosomal subunit protein uL5 (179 aa).

Belongs to the universal ribosomal protein uL5 family. In terms of assembly, part of the 50S ribosomal subunit; part of the 5S rRNA/L5/L18/L25 subcomplex. Contacts the 5S rRNA and the P site tRNA. Forms a bridge to the 30S subunit in the 70S ribosome.

Functionally, this is one of the proteins that bind and probably mediate the attachment of the 5S RNA into the large ribosomal subunit, where it forms part of the central protuberance. In the 70S ribosome it contacts protein S13 of the 30S subunit (bridge B1b), connecting the 2 subunits; this bridge is implicated in subunit movement. Contacts the P site tRNA; the 5S rRNA and some of its associated proteins might help stabilize positioning of ribosome-bound tRNAs. The protein is Large ribosomal subunit protein uL5 of Macrococcus caseolyticus (strain JCSC5402) (Macrococcoides caseolyticum).